The primary structure comprises 196 residues: Putative 3-methyladenine DNA glycosylase (196 aa).

It belongs to the DNA glycosylase MPG family.

The sequence is that of Putative 3-methyladenine DNA glycosylase from Chlorobium phaeobacteroides (strain DSM 266 / SMG 266 / 2430).